An 829-amino-acid chain; its full sequence is MHYDFKKVEQDIQKKWNFYTDVKKAQCYVLEMFPYPSGNIHMGHLRNYTIGDVIARYKRACGINVFHPIGWDAFGLPAENAALSYNINPQTWTKNNIDNMRCQLKSIGLSYDWNKELATCDADYYKHEQAFFLDFLKCGLAYRKESLVNWDPIDQTVLANEQVIDGKGWRSGAVVEKRKLSQWFLKITDFAEELLNDLKVLDKWPEKVKLMQERWIGRSEGVVVDFEILNINKTLQVFTTCPHTLFGASFIAVSFDHPILQCVSDSDIIQQINDFDKNNLITDASSTVEKFGINSGLVVKHPFLCMNLPVYVVNFVLMDYATGAVFGCPAHDQRDFEFAKKYNLQIKQVVFPEIDIDLGKEAYVGSGTMKNSDFLDGMTVDEAKEAMIAKLQLLGIGDKMTYYRIHDWGISRQRYWGCPIPIIYCEKCGTVPVSRKDLPVTLPQDVDFTKSGNPLDNHPTWKYVKCPSCGMDAERETDTFDTFFESSWYFAAFCGTSSGIDKDTCNMLLPVDYYIGGIEHAVLHLLYSRFFCRALTKCGYFNVKEPFSSLITQGMVCHATYSDAQGNYLFPEEARKMMEEGQHVNVGRAEKMSKSKKNVVNLEYIIDKYGADTARLFILSDTPPDRDIEWLDDGIEGASKYLSKLWRMIVSYDQINLNFNVEDIPEDAIKYRRCVHKIVSDITSDLEFCRLNCAVAKFRELSNILSEMIRTSVNSDVVSEAICILIRVIEPFIPHIAEKLWENIGGKDMLWNQMWPKADTELLIERNVNIAVQVNGKFIRTLTVANNIDNDQLKSMALEMAKNKIGNSVVKNVYIIPKRAVNIVIEKLS.

The 'HIGH' region motif lies at 34–44; it reads PYPSGNIHMGH. The short motif at 591–595 is the 'KMSKS' region element; sequence KMSKS. Residue K594 coordinates ATP.

Belongs to the class-I aminoacyl-tRNA synthetase family.

The protein resides in the cytoplasm. It catalyses the reaction tRNA(Leu) + L-leucine + ATP = L-leucyl-tRNA(Leu) + AMP + diphosphate. The chain is Leucine--tRNA ligase from Ehrlichia canis (strain Jake).